The sequence spans 352 residues: Peptide chain release factor 1 (352 aa).

N5-methylglutamine is present on Gln229.

This sequence belongs to the prokaryotic/mitochondrial release factor family. Post-translationally, methylated by PrmC. Methylation increases the termination efficiency of RF1.

It is found in the cytoplasm. Functionally, peptide chain release factor 1 directs the termination of translation in response to the peptide chain termination codons UAG and UAA. The polypeptide is Peptide chain release factor 1 (Gluconacetobacter diazotrophicus (strain ATCC 49037 / DSM 5601 / CCUG 37298 / CIP 103539 / LMG 7603 / PAl5)).